A 272-amino-acid polypeptide reads, in one-letter code: 2-amino-3,7-dideoxy-D-threo-hept-6-ulosonate synthase (272 aa).

The active-site Proton acceptor is D33. 1-deoxy-D-threo-hexo-2,5-diulose 6-phosphate is bound by residues 33–37 (DHGVS) and 153–155 (YPR). The active-site Proton donor is Y153. K184 functions as the Schiff-base intermediate with substrate in the catalytic mechanism. 1-deoxy-D-threo-hexo-2,5-diulose 6-phosphate contacts are provided by residues 209–210 (GG) and 237–238 (GR).

The protein belongs to the DeoC/FbaB aldolase family. ADHS subfamily. As to quaternary structure, homodecamer.

The catalysed reaction is 1-deoxy-D-threo-hexo-2,5-diulose 6-phosphate + L-aspartate 4-semialdehyde = 2,3-dioxopropyl phosphate + 2-amino-2,3,7-trideoxy-D-lyxo-hept-6-ulosonate. In terms of biological role, catalyzes a transaldol reaction between 6-deoxy-5-ketofructose 1-phosphate (DKFP) and L-aspartate semialdehyde (ASA) with an elimination of hydroxypyruvaldehyde phosphate to yield 2-amino-3,7-dideoxy-D-threo-hept-6-ulosonate (ADH). Plays a key role in an alternative pathway of the biosynthesis of 3-dehydroquinate (DHQ), which is involved in the canonical pathway for the biosynthesis of aromatic amino acids. This chain is 2-amino-3,7-dideoxy-D-threo-hept-6-ulosonate synthase, found in Methanococcus vannielii (strain ATCC 35089 / DSM 1224 / JCM 13029 / OCM 148 / SB).